The sequence spans 225 residues: 2-amino-5-formylamino-6-ribosylaminopyrimidin-4(3H)-one 5'-monophosphate deformylase (225 aa).

Fe cation is bound by residues glutamate 28, histidine 30, aspartate 39, and histidine 107.

Belongs to the creatininase superfamily. FAPy deformylase family. As to quaternary structure, homodimer. Requires Fe(2+) as cofactor. Zn(2+) is required as a cofactor.

The catalysed reaction is 2-amino-5-formylamino-6-(5-phospho-D-ribosylamino)pyrimidin-4(3H)-one + H2O = 2,5-diamino-6-(1-D-ribosylamino)pyrimidin-4(3H)-one 5'-phosphate + formate + H(+). The protein operates within cofactor biosynthesis; coenzyme F420 biosynthesis. It functions in the pathway cofactor biosynthesis; riboflavin biosynthesis. Its function is as follows. Catalyzes the hydrolysis of the formamide of 2-amino-5-formylamino-6-ribosylamino-4(3H)-pyrimidinone 5'-monophosphate (FAPy) to form 2,5-diamino-6-ribosylamino-4(3H)-pyrimidinone 5'-phosphate (APy). The chain is 2-amino-5-formylamino-6-ribosylaminopyrimidin-4(3H)-one 5'-monophosphate deformylase from Methanocaldococcus fervens (strain DSM 4213 / JCM 15782 / AG86) (Methanococcus fervens).